The following is a 578-amino-acid chain: Hyaluronan synthase 1 (578 aa).

At 1-25 (MRQQDAPKPTPAACRCSGLARRVLT) the chain is on the cytoplasmic side. The chain crosses the membrane as a helical span at residues 26 to 46 (IAFALLILGLMTWAYAAGVPL). The Extracellular segment spans residues 47-52 (ASDRYG). A helical transmembrane segment spans residues 53-73 (LLAFGLYGAFLSAHLVAQSLF). Residues 74–399 (AYLEHRRVAA…NALWWHRHHA (326 aa)) lie on the Cytoplasmic side of the membrane. The chain crosses the membrane as a helical span at residues 400 to 420 (WMTYEAVVSGLFPFFVAATVL). Topologically, residues 421–430 (RLFYAGRPWA) are extracellular. Residues 431–451 (LLWVLLCVQGVALAKAAFAAW) traverse the membrane as a helical segment. Over 452-457 (LRGCLR) the chain is Cytoplasmic. A helical transmembrane segment spans residues 458–478 (MVLLSLYAPLYMCGLLPAKFL). The Extracellular segment spans residues 479 to 497 (ALVTMNQSGWGTSGRRKLA). Residues 498-518 (ANYVPLLPLALWALLLLGGLV) traverse the membrane as a helical segment. Topologically, residues 519 to 540 (RSVAHEARADWSGPSRAAEAYH) are cytoplasmic. A helical transmembrane segment spans residues 541–561 (LAAGAGAYVGYWVAMLTLYWV). The Extracellular portion of the chain corresponds to 562 to 578 (GVRRLCRRRTGGYRVQV).

This sequence belongs to the NodC/HAS family. Requires Mg(2+) as cofactor. In terms of tissue distribution, widely expressed. Highly expressed in ovary followed by spleen, thymus, prostate, testes and large intestine. Weakly expressed in small intestine.

The protein resides in the membrane. It carries out the reaction [hyaluronan](n) + UDP-N-acetyl-alpha-D-glucosamine = N-acetyl-beta-D-glucosaminyl-(1-&gt;4)-[hyaluronan](n) + UDP + H(+). It catalyses the reaction N-acetyl-beta-D-glucosaminyl-(1-&gt;4)-[hyaluronan](n) + UDP-alpha-D-glucuronate = [hyaluronan](n+1) + UDP + H(+). It functions in the pathway glycan biosynthesis; hyaluronan biosynthesis. Its function is as follows. Catalyzes the addition of GlcNAc or GlcUA monosaccharides to the nascent hyaluronan polymer. Therefore, it is essential to hyaluronan synthesis a major component of most extracellular matrices that has a structural role in tissues architectures and regulates cell adhesion, migration and differentiation. This is one of the isozymes catalyzing that reaction. Also able to catalyze the synthesis of chito-oligosaccharide depending on the substrate. The protein is Hyaluronan synthase 1 (HAS1) of Homo sapiens (Human).